We begin with the raw amino-acid sequence, 492 residues long: MDPYKYRPSSAYNAPFYTTNGGAPVSNNISSLTIGERGPVLLEDYHLIEKVANFTRERIPERVVHARGISAKGFFEVTHDISNLTCADFLRAPGVQTPVIVRFSTVVHERASPETMRDIRGFAVKFYTREGNFDLVGNNTPVFFIRDGIQFPDVVHALKPNPKTNIQEYWRILDYMSHLPESLLTWCWMFDDVGIPQDYRHMEGFGVHTYTLIAKSGKVLFVKFHWKPTCGIKNLTDEEAKVVGGANHSHATKDLHDAIASGNYPEWKLFIQTMDPADEDKFDFDPLDVTKIWPEDILPLQPVGRLVLNRTIDNFFNETEQLAFNPGLVVPGIYYSDDKLLQCRIFAYGDTQRHRLGPNYLQLPVNAPKCAHHNNHHEGFMNFMHRDEEINYYPSKFDPVRCAEKVPTPTNSYTGIRTKCVIKKENNFKQAGDRYRSWAPDRQDRFVKRWVEILSEPRLTHEIRGIWISYWSQADRSLGQKLASRLNVRPSI.

Residues histidine 65 and asparagine 138 contribute to the active site. Residue tyrosine 348 participates in heme binding.

It belongs to the catalase family. As to quaternary structure, homotetramer and heterotetramer. At least six or seven isozymes are produced from a mixture of 3 gene products. Interacts with NCA1. Interacts with LSD1. Heme serves as cofactor.

The protein localises to the peroxisome. The catalysed reaction is 2 H2O2 = O2 + 2 H2O. In terms of biological role, occurs in almost all aerobically respiring organisms and serves to protect cells from the toxic effects of hydrogen peroxide. In Arabidopsis thaliana (Mouse-ear cress), this protein is Catalase-3 (CAT3).